Reading from the N-terminus, the 506-residue chain is MNSTPVLEMRNIAKAFGKFYALKGVDLTVYPGEIHALMGENGAGKSTLMKVLAGAYTATSGEILIDGKPFHIRTPKDALSAGITLIYQEMQLAPNLSVAENIFLGSELSHGGLVQRKEMLVQAQKVIDRLGAQFNASDKVMTLTIAEQQQVEIARALHRNSRILVMDEPTAALSSRETHRLFELIMRLRDEGMAIIYISHRMAEVYELSDRVSVLRDGQYVGSLTRDNLNAGELVRMMVGRPLSDLFNKERDIPLGKARLNVHHLTDGGKVQPSSLLVRSGEIVGLAGLVGAGRSELAQLIFGVRKATGGMIEVDGEPVVIHSPREAIDLGIGFLTENRKEQGLFLEMAAAENITMATLERDARWGMLNRKKAQTISDDAIKLLNIRVPHAQVRAGGLSGGNQQKLLISRWVAIGPRILLLDEPARGVDVGAKSEIYRIMNEMARKGVAILMISSELPEIVGMSDRVYVMREGSIAGELNGKNITQENIMTLATGVNDAHSQAVTS.

2 ABC transporter domains span residues 7 to 242 and 250 to 497; these read LEMR…VGRP and ERDI…TGVN. 39-46 lines the ATP pocket; sequence GENGAGKS.

It belongs to the ABC transporter superfamily. Ribose importer (TC 3.A.1.2.1) family. In terms of assembly, the complex is composed of an ATP-binding protein (RbsA), two transmembrane proteins (RbsC) and a solute-binding protein (RbsB).

Its subcellular location is the cell inner membrane. The enzyme catalyses D-ribose(out) + ATP + H2O = D-ribose(in) + ADP + phosphate + H(+). In terms of biological role, part of the ABC transporter complex RbsABC involved in ribose import. Responsible for energy coupling to the transport system. This chain is Ribose import ATP-binding protein RbsA 2, found in Escherichia coli O157:H7.